The sequence spans 235 residues: Glycerol-3-phosphate acyltransferase (235 aa).

6 helical membrane-spanning segments follow: residues 4-24 (LLAI…LVAG), 56-76 (VVTL…VAFF), 94-114 (LLAG…GFKG), 122-142 (AGML…IFLL), 152-172 (VASM…KYIF), and 191-211 (FHDS…LAIL).

It belongs to the PlsY family. Probably interacts with PlsX.

The protein resides in the cell inner membrane. The catalysed reaction is an acyl phosphate + sn-glycerol 3-phosphate = a 1-acyl-sn-glycero-3-phosphate + phosphate. It functions in the pathway lipid metabolism; phospholipid metabolism. Its function is as follows. Catalyzes the transfer of an acyl group from acyl-phosphate (acyl-PO(4)) to glycerol-3-phosphate (G3P) to form lysophosphatidic acid (LPA). This enzyme utilizes acyl-phosphate as fatty acyl donor, but not acyl-CoA or acyl-ACP. In Pelodictyon phaeoclathratiforme (strain DSM 5477 / BU-1), this protein is Glycerol-3-phosphate acyltransferase.